The sequence spans 565 residues: NAD-dependent malic enzyme (565 aa).

The active-site Proton donor is Tyr104. Arg157 contributes to the NAD(+) binding site. The Proton acceptor role is filled by Lys175. Residues Glu246, Asp247, and Asp270 each coordinate a divalent metal cation. The NAD(+) site is built by Asp270 and Asn418.

Belongs to the malic enzymes family. Homotetramer. Mg(2+) is required as a cofactor. The cofactor is Mn(2+).

The enzyme catalyses (S)-malate + NAD(+) = pyruvate + CO2 + NADH. It catalyses the reaction oxaloacetate + H(+) = pyruvate + CO2. The protein is NAD-dependent malic enzyme of Salmonella agona (strain SL483).